Here is a 443-residue protein sequence, read N- to C-terminus: Exodeoxyribonuclease 7 large subunit (443 aa).

It belongs to the XseA family. Heterooligomer composed of large and small subunits.

The protein resides in the cytoplasm. The enzyme catalyses Exonucleolytic cleavage in either 5'- to 3'- or 3'- to 5'-direction to yield nucleoside 5'-phosphates.. Bidirectionally degrades single-stranded DNA into large acid-insoluble oligonucleotides, which are then degraded further into small acid-soluble oligonucleotides. This is Exodeoxyribonuclease 7 large subunit from Stenotrophomonas maltophilia (strain R551-3).